Reading from the N-terminus, the 174-residue chain is ATP-dependent protease subunit HslV (174 aa).

Residue Thr-2 is part of the active site. Na(+) contacts are provided by Gly-157, Cys-160, and Thr-163.

This sequence belongs to the peptidase T1B family. HslV subfamily. As to quaternary structure, a double ring-shaped homohexamer of HslV is capped on each side by a ring-shaped HslU homohexamer. The assembly of the HslU/HslV complex is dependent on binding of ATP.

The protein localises to the cytoplasm. The enzyme catalyses ATP-dependent cleavage of peptide bonds with broad specificity.. With respect to regulation, allosterically activated by HslU binding. Protease subunit of a proteasome-like degradation complex believed to be a general protein degrading machinery. This Shewanella putrefaciens (strain CN-32 / ATCC BAA-453) protein is ATP-dependent protease subunit HslV.